The primary structure comprises 460 residues: Bifunctional protein GlmU (460 aa).

A pyrophosphorylase region spans residues 1–233 (MLDIVIMAAG…ETEVLGVNSP (233 aa)). UDP-N-acetyl-alpha-D-glucosamine is bound by residues lysine 21, glutamine 76, and 81–82 (GT). Mg(2+) is bound at residue aspartate 105. UDP-N-acetyl-alpha-D-glucosamine is bound by residues glycine 140, glutamate 158, and asparagine 231. Mg(2+) is bound at residue asparagine 231. The linker stretch occupies residues 234-254 (LQLADLERRLQRKQAEALLEA). Residues 255 to 460 (GVRLADPARF…AGWQRPQKKR (206 aa)) are N-acetyltransferase. Arginine 337 and lysine 355 together coordinate UDP-N-acetyl-alpha-D-glucosamine. Catalysis depends on histidine 367, which acts as the Proton acceptor. Tyrosine 370 and asparagine 381 together coordinate UDP-N-acetyl-alpha-D-glucosamine. Residues alanine 384, 390–391 (NY), serine 409, glycine 427, and arginine 444 each bind acetyl-CoA.

The protein in the N-terminal section; belongs to the N-acetylglucosamine-1-phosphate uridyltransferase family. It in the C-terminal section; belongs to the transferase hexapeptide repeat family. In terms of assembly, homotrimer. Mg(2+) is required as a cofactor.

The protein localises to the cytoplasm. It carries out the reaction alpha-D-glucosamine 1-phosphate + acetyl-CoA = N-acetyl-alpha-D-glucosamine 1-phosphate + CoA + H(+). It catalyses the reaction N-acetyl-alpha-D-glucosamine 1-phosphate + UTP + H(+) = UDP-N-acetyl-alpha-D-glucosamine + diphosphate. It participates in nucleotide-sugar biosynthesis; UDP-N-acetyl-alpha-D-glucosamine biosynthesis; N-acetyl-alpha-D-glucosamine 1-phosphate from alpha-D-glucosamine 6-phosphate (route II): step 2/2. The protein operates within nucleotide-sugar biosynthesis; UDP-N-acetyl-alpha-D-glucosamine biosynthesis; UDP-N-acetyl-alpha-D-glucosamine from N-acetyl-alpha-D-glucosamine 1-phosphate: step 1/1. Its pathway is bacterial outer membrane biogenesis; LPS lipid A biosynthesis. Its function is as follows. Catalyzes the last two sequential reactions in the de novo biosynthetic pathway for UDP-N-acetylglucosamine (UDP-GlcNAc). The C-terminal domain catalyzes the transfer of acetyl group from acetyl coenzyme A to glucosamine-1-phosphate (GlcN-1-P) to produce N-acetylglucosamine-1-phosphate (GlcNAc-1-P), which is converted into UDP-GlcNAc by the transfer of uridine 5-monophosphate (from uridine 5-triphosphate), a reaction catalyzed by the N-terminal domain. This Methylibium petroleiphilum (strain ATCC BAA-1232 / LMG 22953 / PM1) protein is Bifunctional protein GlmU.